The chain runs to 403 residues: Probable N-acetyltransferase HLS1 (403 aa).

The region spanning 2–177 (TVVREYDPTR…VNPVYAHRVN (176 aa)) is the N-acetyltransferase domain.

It belongs to the acetyltransferase family.

Functionally, ethylene-responsive N-acetyltransferase required for differential cell elongation in the hypocotyl. Regulates apical hook formation of dark-grown seedlings. May control differential cell growth by regulating auxin activity. May be involved in negative feedback regulation of auxin homeostasis through the control of GH3-like genes. Modulates de novo shoot organogenesis. In Arabidopsis thaliana (Mouse-ear cress), this protein is Probable N-acetyltransferase HLS1 (HLS1).